The sequence spans 173 residues: Crossover junction endodeoxyribonuclease RuvC (173 aa).

Catalysis depends on residues Asp-8, Glu-67, and Asp-139. 3 residues coordinate Mg(2+): Asp-8, Glu-67, and Asp-139.

Belongs to the RuvC family. As to quaternary structure, homodimer which binds Holliday junction (HJ) DNA. The HJ becomes 2-fold symmetrical on binding to RuvC with unstacked arms; it has a different conformation from HJ DNA in complex with RuvA. In the full resolvosome a probable DNA-RuvA(4)-RuvB(12)-RuvC(2) complex forms which resolves the HJ. Requires Mg(2+) as cofactor.

The protein localises to the cytoplasm. The catalysed reaction is Endonucleolytic cleavage at a junction such as a reciprocal single-stranded crossover between two homologous DNA duplexes (Holliday junction).. The RuvA-RuvB-RuvC complex processes Holliday junction (HJ) DNA during genetic recombination and DNA repair. Endonuclease that resolves HJ intermediates. Cleaves cruciform DNA by making single-stranded nicks across the HJ at symmetrical positions within the homologous arms, yielding a 5'-phosphate and a 3'-hydroxyl group; requires a central core of homology in the junction. The consensus cleavage sequence is 5'-(A/T)TT(C/G)-3'. Cleavage occurs on the 3'-side of the TT dinucleotide at the point of strand exchange. HJ branch migration catalyzed by RuvA-RuvB allows RuvC to scan DNA until it finds its consensus sequence, where it cleaves and resolves the cruciform DNA. This is Crossover junction endodeoxyribonuclease RuvC from Edwardsiella ictaluri (strain 93-146).